The following is a 319-amino-acid chain: rRNA adenine N-6-methyltransferase (319 aa).

Positions Met1–Ala59 are disordered. Over residues Arg26–Pro41 the composition is skewed to basic and acidic residues. Asn66, Leu68, Gly93, Glu114, Asp141, and Asn157 together coordinate S-adenosyl-L-methionine.

Belongs to the class I-like SAM-binding methyltransferase superfamily. rRNA adenine N(6)-methyltransferase family.

The catalysed reaction is adenosine(2085) in 23S rRNA + 2 S-adenosyl-L-methionine = N(6)-dimethyladenosine(2085) in 23S rRNA + 2 S-adenosyl-L-homocysteine + 2 H(+). In terms of biological role, this protein produces a dimethylation of the adenine residue at position 2085 in 23S rRNA, resulting in reduced affinity between ribosomes and macrolide-lincosamide-streptogramin B antibiotics. The sequence is that of rRNA adenine N-6-methyltransferase (ermSF) from Streptomyces fradiae (Streptomyces roseoflavus).